Here is a 163-residue protein sequence, read N- to C-terminus: Peptide deformylase (163 aa).

Fe cation contacts are provided by Cys-91 and His-133. Glu-134 is an active-site residue. Fe cation is bound at residue His-137.

The protein belongs to the polypeptide deformylase family. Fe(2+) is required as a cofactor.

It catalyses the reaction N-terminal N-formyl-L-methionyl-[peptide] + H2O = N-terminal L-methionyl-[peptide] + formate. Its function is as follows. Removes the formyl group from the N-terminal Met of newly synthesized proteins. Requires at least a dipeptide for an efficient rate of reaction. N-terminal L-methionine is a prerequisite for activity but the enzyme has broad specificity at other positions. In Lachnoclostridium phytofermentans (strain ATCC 700394 / DSM 18823 / ISDg) (Clostridium phytofermentans), this protein is Peptide deformylase.